The chain runs to 278 residues: Sulfur carrier protein FdhD (278 aa).

The active-site Cysteine persulfide intermediate is Cys121. 260–265 (FCKPGR) serves as a coordination point for Mo-bis(molybdopterin guanine dinucleotide).

The protein belongs to the FdhD family.

The protein resides in the cytoplasm. In terms of biological role, required for formate dehydrogenase (FDH) activity. Acts as a sulfur carrier protein that transfers sulfur from IscS to the molybdenum cofactor prior to its insertion into FDH. This chain is Sulfur carrier protein FdhD, found in Salmonella schwarzengrund (strain CVM19633).